We begin with the raw amino-acid sequence, 76 residues long: Large ribosomal subunit protein bL31 (76 aa).

Zn(2+)-binding residues include cysteine 16, cysteine 18, cysteine 38, and cysteine 41.

Belongs to the bacterial ribosomal protein bL31 family. Type A subfamily. As to quaternary structure, part of the 50S ribosomal subunit. Requires Zn(2+) as cofactor.

Binds the 23S rRNA. This is Large ribosomal subunit protein bL31 from Nocardia farcinica (strain IFM 10152).